A 466-amino-acid chain; its full sequence is Mitochondrial-processing peptidase subunit beta (466 aa).

Residue histidine 73 participates in Zn(2+) binding. Glutamate 76 (proton acceptor) is an active-site residue. Histidine 77 and glutamate 153 together coordinate Zn(2+).

It belongs to the peptidase M16 family. Heterodimer of mppA (alpha) and mppB (beta) subunits, forming the mitochondrial processing protease (MPP) in which mppA is involved in substrate recognition and binding and mppB is the catalytic subunit. The cofactor is Zn(2+).

The protein localises to the mitochondrion matrix. The catalysed reaction is Release of N-terminal transit peptides from precursor proteins imported into the mitochondrion, typically with Arg in position P2.. Its activity is regulated as follows. Binding to mppA is required for catalytic activity. Its function is as follows. Catalytic subunit of the essential mitochondrial processing protease (MPP), which cleaves the mitochondrial sequence off newly imported precursors proteins. Preferentially, cleaves after an arginine at position P2. The chain is Mitochondrial-processing peptidase subunit beta (mppB) from Lentinula edodes (Shiitake mushroom).